The chain runs to 443 residues: UPF0597 protein Dvul_2496 (443 aa).

Residues 156–178 are disordered; that stretch reads GMERAPEADGTLHGGASCEPSAS.

This sequence belongs to the UPF0597 family.

This is UPF0597 protein Dvul_2496 from Nitratidesulfovibrio vulgaris (strain DP4) (Desulfovibrio vulgaris).